A 589-amino-acid chain; its full sequence is Vesicular glutamate transporter 3 (589 aa).

The Cytoplasmic segment spans residues Met1 to Tyr76. The segment covering Thr40 to Asn49 has biased composition (acidic residues). The tract at residues Thr40–Ser61 is disordered. Residues Ile77 to Gly97 form a helical membrane-spanning segment. The Vesicular portion of the chain corresponds to Val98–Gly130. N-linked (GlcNAc...) asparagine glycosylation is present at Asn106. The helical transmembrane segment at Leu131–Ser151 threads the bilayer. At Asn152 to Lys153 the chain is on the cytoplasmic side. The helical transmembrane segment at Phe154–Ile174 threads the bilayer. The Vesicular segment spans residues Pro175–Tyr182. Residues Gly183–Cys203 traverse the membrane as a helical segment. Topologically, residues His204–Thr221 are cytoplasmic. Residues Thr222–Val242 traverse the membrane as a helical segment. Residues Gln243 to Ser249 are Vesicular-facing. Residues Val250–Tyr270 form a helical membrane-spanning segment. At Glu271–Leu314 the chain is on the cytoplasmic side. Residues Pro315–Ile335 traverse the membrane as a helical segment. Over Ser336 to Gly353 the chain is Vesicular. A helical membrane pass occupies residues Leu354–Ala374. The Cytoplasmic portion of the chain corresponds to Asp375–Lys390. Residues Ile391–His411 traverse the membrane as a helical segment. Residues Thr412–Lys413 are Vesicular-facing. A helical transmembrane segment spans residues Gly414–Phe434. Topologically, residues Asn435–Ser447 are cytoplasmic. A helical transmembrane segment spans residues Ile448–Val468. Over Gly469–Gln481 the chain is Vesicular. The helical transmembrane segment at Asn482 to Ala502 threads the bilayer. At Ser503–Ser586 the chain is on the cytoplasmic side. The tract at residues Lys559–Ser589 is disordered. Positions Asn580–Ser589 are enriched in basic and acidic residues.

Belongs to the major facilitator superfamily. Sodium/anion cotransporter family. VGLUT subfamily. As to expression, expressed in amygdala, cerebellum, hippocampus, medulla, spinal cord and thalamus.

Its subcellular location is the cytoplasmic vesicle. It is found in the secretory vesicle. The protein resides in the synaptic vesicle membrane. The protein localises to the cell membrane. It localises to the synapse. Its subcellular location is the synaptosome. The enzyme catalyses L-glutamate(out) = L-glutamate(in). It carries out the reaction 3 Na(+)(out) + phosphate(out) = 3 Na(+)(in) + phosphate(in). It catalyses the reaction chloride(in) = chloride(out). Its activity is regulated as follows. The L-glutamate uniporter activity exhibits a biphasic dependence on chloride concentration. Chloride channel activity is allosterically activated by lumenal H(+) and Cl(-) leading to synaptic vesicles acidification. The glutamate transport activity is allosterically activated by lumenal H(+) and Cl(-), preventing non-vesicular L-glutamate release. Its function is as follows. Multifunctional transporter that transports L-glutamate as well as multiple ions such as chloride, sodium and phosphate. At the synaptic vesicle membrane, mainly functions as an uniporter that mediates the uptake of L-glutamate into synaptic vesicles at presynaptic nerve terminals of excitatory neural cells. The L-glutamate uniporter activity is electrogenic and is driven by the proton electrochemical gradient, mainly by the electrical gradient established by the vacuolar H(+)-ATPase across the synaptic vesicle membrane. In addition, functions as a chloride channel that allows a chloride permeation through the synaptic vesicle membrane that affects the proton electrochemical gradient and promotes synaptic vesicles acidification. At the plasma membrane, following exocytosis, functions as a symporter of Na(+) and phosphate from the extracellular space to the cytoplasm allowing synaptic phosphate homeostasis regulation. The symporter activity is electrogenic. Moreover, operates synergistically with SLC18A3/VACHT under a constant H(+) gradient, thereby allowing striatal vesicular acetylcholine uptake. The sequence is that of Vesicular glutamate transporter 3 from Homo sapiens (Human).